Consider the following 100-residue polypeptide: Replication restart protein PriB (100 aa).

Residues 1–100 (MTNRMELSGT…VLHADDIIHI (100 aa)) form the SSB domain.

Belongs to the PriB family. Homodimer. Interacts with PriA and DnaT. Component of the replication restart primosome. Primosome assembly occurs via a 'hand-off' mechanism. PriA binds to replication forks, subsequently PriB then DnaT bind; DnaT then displaces ssDNA to generate the helicase loading substrate.

Involved in the restart of stalled replication forks, which reloads the replicative helicase on sites other than the origin of replication; the PriA-PriB pathway is the major replication restart pathway. During primosome assembly it facilitates complex formation between PriA and DnaT on DNA; stabilizes PriA on DNA. Stimulates the DNA unwinding activity of PriA helicase. In Vibrio vulnificus (strain CMCP6), this protein is Replication restart protein PriB.